The chain runs to 613 residues: Spastin (613 aa).

A disordered region spans residues 1–42 (MNSPGGRGKKKGSAGSSSAPPAAGASPSAPSGPAPPAPPAGA). Residues 1-61 (MNSPGGRGKK…KRNLYYFSYP (61 aa)) are Cytoplasmic-facing. The span at 13 to 29 (SAGSSSAPPAAGASPSA) shows a compositional bias: low complexity. Pro residues predominate over residues 30–39 (PSGPAPPAPP). Positions 62-82 (LFAAFALLRFVAFQLGLLVAW) form an intramembrane region, helical. Topologically, residues 83-613 (LCERLSRGAL…WNKDFGDTTV (531 aa)) are cytoplasmic. Residues 117-192 (HKRAFECISM…AMAKDRLQLL (76 aa)) enclose the MIT domain. The disordered stretch occupies residues 224–312 (SESGAVPKKK…PAARKKKDTK (89 aa)). Composition is skewed to polar residues over residues 237–257 (THTS…STGL), 264–274 (PSYSGISTASV), and 281–299 (PATS…NKPS). Residue 379–386 (GPPGNGKT) participates in ATP binding.

It belongs to the AAA ATPase family. Spastin subfamily. As to quaternary structure, homohexamer. The homohexamer is stabilized by ATP-binding. The homohexamer may adopt a ring conformation through which microtubules pass prior to being severed. Interacts with microtubules.

The protein resides in the membrane. It localises to the cytoplasm. It is found in the cytoskeleton. Its subcellular location is the microtubule organizing center. The protein localises to the centrosome. The protein resides in the perinuclear region. It localises to the nucleus. It carries out the reaction n ATP + n H2O + a microtubule = n ADP + n phosphate + (n+1) alpha/beta tubulin heterodimers.. ATP-dependent microtubule severing protein that specifically recognizes and cuts microtubules that are polyglutamylated. Preferentially recognizes and acts on microtubules decorated with short polyglutamate tails: severing activity increases as the number of glutamates per tubulin rises from one to eight, but decreases beyond this glutamylation threshold. Microtubule severing promotes reorganization of cellular microtubule arrays and the release of microtubules from the centrosome following nucleation. Required for membrane traffic from the endoplasmic reticulum (ER) to the Golgi and for completion of the abscission stage of cytokinesis. Also plays a role in axon growth and the formation of axonal branches. The sequence is that of Spastin from Gallus gallus (Chicken).